Reading from the N-terminus, the 24-residue chain is Coenzyme PQQ synthesis protein A (24 aa).

The segment at residues 16 to 20 (EVTMY) is a cross-link (pyrroloquinoline quinone (Glu-Tyr)).

It belongs to the PqqA family.

It functions in the pathway cofactor biosynthesis; pyrroloquinoline quinone biosynthesis. In terms of biological role, required for coenzyme pyrroloquinoline quinone (PQQ) biosynthesis. PQQ is probably formed by cross-linking a specific glutamate to a specific tyrosine residue and excising these residues from the peptide. This Acinetobacter baumannii (strain SDF) protein is Coenzyme PQQ synthesis protein A.